We begin with the raw amino-acid sequence, 192 residues long: UPF0149 protein VP2588 (192 aa).

Belongs to the UPF0149 family.

The polypeptide is UPF0149 protein VP2588 (Vibrio parahaemolyticus serotype O3:K6 (strain RIMD 2210633)).